The chain runs to 354 residues: Guanine nucleotide-binding protein G(q) subunit alpha (354 aa).

Residues cysteine 3 and cysteine 4 are each lipidated (S-palmitoyl cysteine). The G-alpha domain maps to 32–354 (RELKLLLLGT…QLNLKEYNLV (323 aa)). Residues 35-48 (KLLLLGTGESGKST) are G1 motif. GTP-binding positions include 40–47 (GTGESGKS), 174–180 (LRVRVPT), 199–203 (DVGGQ), 269–272 (NKKD), and alanine 326. The Mg(2+) site is built by serine 47 and threonine 180. The segment at 172–180 (DILRVRVPT) is G2 motif. Residues 195–204 (FRMVDVGGQR) are G3 motif. Residues 265-272 (ILFLNKKD) form a G4 motif region. Residues 324-329 (TCATDT) form a G5 motif region.

The protein belongs to the G-alpha family. G(q) subfamily. As to quaternary structure, g proteins are composed of 3 units; alpha, beta and gamma. The alpha chain contains the guanine nucleotide binding site. In terms of tissue distribution, a high concentration was found in the retinal light-sensitive outer segment.

In terms of biological role, guanine nucleotide-binding proteins (G proteins) are involved as modulators or transducers in various transmembrane signaling systems. Its function is as follows. The G(q) alpha subunit is involved in the light-dependent activation of phospholipase C. In Loligo forbesii (Veined squid), this protein is Guanine nucleotide-binding protein G(q) subunit alpha.